The sequence spans 122 residues: Large ribosomal subunit protein uL14 (122 aa).

The protein belongs to the universal ribosomal protein uL14 family. In terms of assembly, part of the 50S ribosomal subunit. Forms a cluster with proteins L3 and L19. In the 70S ribosome, L14 and L19 interact and together make contacts with the 16S rRNA in bridges B5 and B8.

Binds to 23S rRNA. Forms part of two intersubunit bridges in the 70S ribosome. The chain is Large ribosomal subunit protein uL14 from Maridesulfovibrio salexigens (strain ATCC 14822 / DSM 2638 / NCIMB 8403 / VKM B-1763) (Desulfovibrio salexigens).